The sequence spans 242 residues: Putative ABC transporter ATP-binding protein TTE0246 (242 aa).

The region spanning 5 to 242 (FELKNVSYFY…EKLLLKANLI (238 aa)) is the ABC transporter domain. Residue 38-45 (GANGSGKS) participates in ATP binding.

Belongs to the ABC transporter superfamily.

The protein resides in the cell membrane. In terms of biological role, probably part of an ABC transporter complex. Responsible for energy coupling to the transport system. The chain is Putative ABC transporter ATP-binding protein TTE0246 from Caldanaerobacter subterraneus subsp. tengcongensis (strain DSM 15242 / JCM 11007 / NBRC 100824 / MB4) (Thermoanaerobacter tengcongensis).